The following is a 157-amino-acid chain: Isotocin-neurophysin IT 1 (157 aa).

An N-terminal signal peptide occupies residues 1 to 20 (MFGTSVSALCLLFLLSVCTA). A disulfide bridge links Cys-21 with Cys-26. At Gly-29 the chain carries Glycine amide. 7 disulfides stabilise this stretch: Cys-42–Cys-86, Cys-45–Cys-59, Cys-53–Cys-76, Cys-60–Cys-66, Cys-93–Cys-106, Cys-100–Cys-118, and Cys-107–Cys-112.

This sequence belongs to the vasopressin/oxytocin family. In terms of processing, seven disulfide bonds are present in neurophysin.

It localises to the secreted. In terms of biological role, isotocin causes contraction of smooth muscles. This is Isotocin-neurophysin IT 1 from Oncorhynchus masou (Cherry salmon).